The following is a 418-amino-acid chain: Thyroid hormone receptor alpha (418 aa).

The segment at 1 to 41 (MDQNLSGLDCLSEPDEKRWPDGKRKRKNSQCMGKSGMSGDS) is disordered. The modulating stretch occupies residues 1–60 (MDQNLSGLDCLSEPDEKRWPDGKRKRKNSQCMGKSGMSGDSSVSLLSAGYIPSYLTKDEP). Positions 61, 64, 78, 81, 99, 105, 115, and 118 each coordinate Zn(2+). 2 NR C4-type zinc fingers span residues 61-81 (CVVC…CEGC) and 99-123 (CKYD…FKKC). Residues 61–135 (CVVCSDKATG…VGMAMDLVLD (75 aa)) constitute a DNA-binding region (nuclear receptor). In terms of domain architecture, NR LBD spans 171–415 (EEWELIRIVT…PPLFLEVFED (245 aa)). The 3,3',5-triiodo-L-thyronine site is built by arginine 236 and serine 285.

This sequence belongs to the nuclear hormone receptor family. NR1 subfamily. As to expression, highest level of expression in erythrocytes. Also expressed in liver, tail, eye, muscle and skin.

The protein resides in the nucleus. Its function is as follows. Nuclear hormone receptor that can act as a repressor or activator of transcription. High affinity receptor for thyroid hormones, including triiodothyronine and thyroxine. This is Thyroid hormone receptor alpha (thra) from Aquarana catesbeiana (American bullfrog).